The sequence spans 122 residues: Large ribosomal subunit protein uL14 (122 aa).

It belongs to the universal ribosomal protein uL14 family. Part of the 50S ribosomal subunit. Forms a cluster with proteins L3 and L19. In the 70S ribosome, L14 and L19 interact and together make contacts with the 16S rRNA in bridges B5 and B8.

Functionally, binds to 23S rRNA. Forms part of two intersubunit bridges in the 70S ribosome. The sequence is that of Large ribosomal subunit protein uL14 from Dehalococcoides mccartyi (strain ATCC BAA-2266 / KCTC 15142 / 195) (Dehalococcoides ethenogenes (strain 195)).